The sequence spans 100 residues: Large ribosomal subunit protein uL23 (100 aa).

This sequence belongs to the universal ribosomal protein uL23 family. In terms of assembly, part of the 50S ribosomal subunit. Contacts protein L29, and trigger factor when it is bound to the ribosome.

In terms of biological role, one of the early assembly proteins it binds 23S rRNA. One of the proteins that surrounds the polypeptide exit tunnel on the outside of the ribosome. Forms the main docking site for trigger factor binding to the ribosome. This chain is Large ribosomal subunit protein uL23, found in Aeromonas hydrophila subsp. hydrophila (strain ATCC 7966 / DSM 30187 / BCRC 13018 / CCUG 14551 / JCM 1027 / KCTC 2358 / NCIMB 9240 / NCTC 8049).